The chain runs to 229 residues: Clathrin light chain B (229 aa).

The span at 1 to 17 (MADDFGFFSSSESGAPE) shows a compositional bias: low complexity. The interval 1 to 82 (MADDFGFFSS…NGDVFQEANG (82 aa)) is disordered. 2 positions are modified to phosphoserine: S11 and S13. The segment covering 58–73 (GPTSGAGSEDMGTTVN) has biased composition (polar residues). Residues 93-155 (ADRLTQEPES…QVEKNKINNR (63 aa)) are involved in binding clathrin heavy chain. T187 is modified (phosphothreonine). C199 and C209 are joined by a disulfide. K204 is subject to N6-acetyllysine. S217 is subject to Phosphoserine.

It belongs to the clathrin light chain family. As to quaternary structure, clathrin coats are formed from molecules containing 3 heavy chains and 3 light chains. Interacts (via N-terminus) with HIP1. Interacts with HIP1R.

The protein localises to the cytoplasmic vesicle membrane. It is found in the membrane. It localises to the coated pit. Its function is as follows. Clathrin is the major protein of the polyhedral coat of coated pits and vesicles. The sequence is that of Clathrin light chain B (CLTB) from Homo sapiens (Human).